The sequence spans 436 residues: 3-ketoacyl-CoA thiolase (436 aa).

The Acyl-thioester intermediate role is filled by C99. Catalysis depends on proton acceptor residues H392 and C422.

This sequence belongs to the thiolase-like superfamily. Thiolase family. Heterotetramer of two alpha chains (FadJ) and two beta chains (FadI).

It is found in the cytoplasm. It catalyses the reaction an acyl-CoA + acetyl-CoA = a 3-oxoacyl-CoA + CoA. It participates in lipid metabolism; fatty acid beta-oxidation. Functionally, catalyzes the final step of fatty acid oxidation in which acetyl-CoA is released and the CoA ester of a fatty acid two carbons shorter is formed. The protein is 3-ketoacyl-CoA thiolase of Photobacterium profundum (strain SS9).